A 328-amino-acid chain; its full sequence is tRNA U34 carboxymethyltransferase (328 aa).

Carboxy-S-adenosyl-L-methionine contacts are provided by residues lysine 91, tryptophan 105, lysine 110, glycine 130, 181–182, methionine 196, tyrosine 200, and arginine 315; that span reads IE.

This sequence belongs to the class I-like SAM-binding methyltransferase superfamily. CmoB family. As to quaternary structure, homotetramer.

It catalyses the reaction carboxy-S-adenosyl-L-methionine + 5-hydroxyuridine(34) in tRNA = 5-carboxymethoxyuridine(34) in tRNA + S-adenosyl-L-homocysteine + H(+). Its function is as follows. Catalyzes carboxymethyl transfer from carboxy-S-adenosyl-L-methionine (Cx-SAM) to 5-hydroxyuridine (ho5U) to form 5-carboxymethoxyuridine (cmo5U) at position 34 in tRNAs. In Pectobacterium carotovorum subsp. carotovorum (strain PC1), this protein is tRNA U34 carboxymethyltransferase.